The chain runs to 288 residues: MFEPVPDLNLEASVELGEVNIDQTTPMIKENSGFISRSRRLFAHRSKDDERKLALRFFLQRLYFLDHREIHYLFRCVDAVKDVTITKKNNIIVAPYIALLTIASKGCKLTETMIEAFFPELYNEHSKKFKFNSQVSIIQEKLGYQFGNYHVYDFEPYYSTVALAIRDEHSSGIFNIRQESYLVSSLSEITYRFYLINLKSDLVQWSASTGAVINQMVNTVLITVYEKLQLVIENDSQFTCSLAVESKLPIKLLKDRNELFTKFINELKKTSSFKISKRDKDTLLKYFT.

This sequence belongs to the orthopoxvirus OPG134 family. As to quaternary structure, heterodimer of a 45 kDa (A23R) and a 32 kDa (A8R) subunit to form the virus intermediate transcription factor (VITF)-3.

Its function is as follows. Acts with RNA polymerase to initiate transcription from intermediate gene promoters. The chain is Intermediate transcription factor 3 small subunit (OPG134) from Homo sapiens (Human).